The following is a 543-amino-acid chain: Heparanase (543 aa).

Positions 1–35 (MLLRSKPALPPPLMLLLLGPLGPLSPGALPRPAQA) are cleaved as a signal peptide. Heparan sulfate group-binding positions include 62 to 64 (DAN) and T97. A propeptide spans 110–157 (STFEERSYWQSQVNQDICKYGSIPPDVEEKLRLEWPYQEQLLLREHYQ) (linker peptide). Residues C127 and C179 are joined by a disulfide bond. Position 158-162 (158-162 (KKFKN)) interacts with heparan sulfate group. N162, N178, N200, and N217 each carry an N-linked (GlcNAc...) asparagine glycan. Catalysis depends on E225, which acts as the Proton donor. Residue N238 is glycosylated (N-linked (GlcNAc...) asparagine). Residues 270-280 (QPRRKTAKMLK), H296, and R303 contribute to the heparan sulfate group site. Residues 288–417 (EVIDSVTWHH…LLFKKLVGTK (130 aa)) are required for heterodimerization with the heparanase 8 kDa subunit. E343 acts as the Nucleophile in catalysis. Heparan sulfate group contacts are provided by residues 348–350 (YGG) and 389–391 (GNY). C437 and C542 are disulfide-bonded. N459 carries an N-linked (GlcNAc...) asparagine glycan. Residues 527 to 543 (FSYSFFVIRNAKVAACI) are required for transferring proheparanase to the Golgi apparatus, secretion and subsequent enzyme activity and for enhancement of PKB/AKT1 phosphorylation.

The protein belongs to the glycosyl hydrolase 79 family. Heterodimer; heterodimer formation between the 8 kDa and the 50 kDa subunits is required for enzyme activity. Interacts with TF; the interaction, inhibited by heparin, enhances the generation of activated factor X and activates coagulation. Interacts with HRG; the interaction is enhanced at acidic pH, partially inhibits binding of HPSE to cell surface receptors and modulates its enzymatic activity. Interacts with SDC1; the interaction enhances the shedding of SDC1. Interacts with HPSE2. In terms of processing, proteolytically processed. The cleavage of the 65 kDa form leads to the generation of a linker peptide, and 8 kDa and 50 kDa products. The active form, the 8/50 kDa heterodimer, is resistant to degradation. Complete removal of the linker peptide appears to be a prerequisite to the complete activation of the enzyme. Post-translationally, N-glycosylated. Glycosylation of the 50 kDa subunit appears to be essential for its solubility. In terms of tissue distribution, highly expressed in placenta and spleen and weakly expressed in lymph node, thymus, peripheral blood leukocytes, bone marrow, endothelial cells, fetal liver and tumor tissues. Also expressed in hair follicles, specifically in both Henle's and Huxley's layers of inner the root sheath (IRS) at anagen phase.

Its subcellular location is the lysosome membrane. The protein localises to the secreted. The protein resides in the nucleus. The catalysed reaction is endohydrolysis of (1-&gt;4)-beta-D-glycosidic bonds of heparan sulfate chains in heparan sulfate proteoglycan.. Inhibited by EDTA, laminarin sulfate and, to a lower extent, by heparin and sulfamin and activated by calcium and magnesium. In terms of biological role, endoglycosidase that cleaves heparan sulfate proteoglycans (HSPGs) into heparan sulfate side chains and core proteoglycans. Participates in extracellular matrix (ECM) degradation and remodeling. Selectively cleaves the linkage between a glucuronic acid unit and an N-sulfo glucosamine unit carrying either a 3-O-sulfo or a 6-O-sulfo group. Can also cleave the linkage between a glucuronic acid unit and an N-sulfo glucosamine unit carrying a 2-O-sulfo group, but not linkages between a glucuronic acid unit and a 2-O-sulfated iduronic acid moiety. It is essentially inactive at neutral pH but becomes active under acidic conditions such as during tumor invasion and in inflammatory processes. Facilitates cell migration associated with metastasis, wound healing and inflammation. Enhances shedding of syndecans, and increases endothelial invasion and angiogenesis in myelomas. Acts as a procoagulant by increasing the generation of activation factor X in the presence of tissue factor and activation factor VII. Increases cell adhesion to the extracellular matrix (ECM), independent of its enzymatic activity. Induces AKT1/PKB phosphorylation via lipid rafts increasing cell mobility and invasion. Heparin increases this AKT1/PKB activation. Regulates osteogenesis. Enhances angiogenesis through up-regulation of SRC-mediated activation of VEGF. Implicated in hair follicle inner root sheath differentiation and hair homeostasis. In Homo sapiens (Human), this protein is Heparanase (HPSE).